The following is a 290-amino-acid chain: tRNA dimethylallyltransferase (290 aa).

9-16 (GPTASGKT) is an ATP binding site. A substrate-binding site is contributed by 11–16 (TASGKT). Residues 34–37 (DSTQ) form an interaction with substrate tRNA region.

Belongs to the IPP transferase family. As to quaternary structure, monomer. Mg(2+) is required as a cofactor.

It catalyses the reaction adenosine(37) in tRNA + dimethylallyl diphosphate = N(6)-dimethylallyladenosine(37) in tRNA + diphosphate. In terms of biological role, catalyzes the transfer of a dimethylallyl group onto the adenine at position 37 in tRNAs that read codons beginning with uridine, leading to the formation of N6-(dimethylallyl)adenosine (i(6)A). The sequence is that of tRNA dimethylallyltransferase from Phytoplasma australiense.